The sequence spans 383 residues: Acetylornithine deacetylase (383 aa).

Zn(2+) is bound at residue His-80. The active site involves Asp-82. Asp-112 lines the Zn(2+) pocket. Residue Glu-144 is part of the active site. 3 residues coordinate Zn(2+): Glu-145, Glu-169, and His-355.

The protein belongs to the peptidase M20A family. ArgE subfamily. In terms of assembly, homodimer. Requires Zn(2+) as cofactor. Co(2+) is required as a cofactor. It depends on glutathione as a cofactor.

It is found in the cytoplasm. The enzyme catalyses N(2)-acetyl-L-ornithine + H2O = L-ornithine + acetate. It participates in amino-acid biosynthesis; L-arginine biosynthesis; L-ornithine from N(2)-acetyl-L-ornithine (linear): step 1/1. In terms of biological role, catalyzes the hydrolysis of the amide bond of N(2)-acetylated L-amino acids. Cleaves the acetyl group from N-acetyl-L-ornithine to form L-ornithine, an intermediate in L-arginine biosynthesis pathway, and a branchpoint in the synthesis of polyamines. The polypeptide is Acetylornithine deacetylase (Shigella sonnei (strain Ss046)).